A 1115-amino-acid chain; its full sequence is Carbamoyl phosphate synthase large chain (1115 aa).

The segment at 1 to 407 (MPRRTDLHHV…ALGKVMRSLE (407 aa)) is carboxyphosphate synthetic domain. ATP-binding residues include Arg-134, Arg-174, Gly-180, Gly-181, Glu-213, Ile-215, Glu-220, Gly-246, Val-247, His-248, Gln-290, and Glu-304. The ATP-grasp 1 domain maps to 138-333 (KDIVAKAGGE…IAKIAAKLAI (196 aa)). Positions 290, 304, and 306 each coordinate Mg(2+). Positions 290, 304, and 306 each coordinate Mn(2+). Residues 408–559 (TTRAGFWTAP…ELDPAAETEV (152 aa)) are oligomerization domain. A carbamoyl phosphate synthetic domain region spans residues 560–965 (APQTERPKVL…AFAKSQTAAY (406 aa)). An ATP-grasp 2 domain is found at 693-884 (GDLLSAAGLP…LAKACARIML (192 aa)). ATP is bound by residues Arg-729, Arg-768, Leu-770, Glu-775, Gly-800, Ile-801, His-802, Ser-803, Gln-843, and Glu-855. Residues Gln-843, Glu-855, and Asn-857 each contribute to the Mg(2+) site. The Mn(2+) site is built by Gln-843, Glu-855, and Asn-857. Residues 966 to 1113 (GSLPAQGTVF…QELHRVIGGV (148 aa)) form the MGS-like domain. The tract at residues 966–1115 (GSLPAQGTVF…LHRVIGGVER (150 aa)) is allosteric domain.

This sequence belongs to the CarB family. In terms of assembly, composed of two chains; the small (or glutamine) chain promotes the hydrolysis of glutamine to ammonia, which is used by the large (or ammonia) chain to synthesize carbamoyl phosphate. Tetramer of heterodimers (alpha,beta)4. Requires Mg(2+) as cofactor. It depends on Mn(2+) as a cofactor.

It carries out the reaction hydrogencarbonate + L-glutamine + 2 ATP + H2O = carbamoyl phosphate + L-glutamate + 2 ADP + phosphate + 2 H(+). It catalyses the reaction hydrogencarbonate + NH4(+) + 2 ATP = carbamoyl phosphate + 2 ADP + phosphate + 2 H(+). The protein operates within amino-acid biosynthesis; L-arginine biosynthesis; carbamoyl phosphate from bicarbonate: step 1/1. It functions in the pathway pyrimidine metabolism; UMP biosynthesis via de novo pathway; (S)-dihydroorotate from bicarbonate: step 1/3. Its function is as follows. Large subunit of the glutamine-dependent carbamoyl phosphate synthetase (CPSase). CPSase catalyzes the formation of carbamoyl phosphate from the ammonia moiety of glutamine, carbonate, and phosphate donated by ATP, constituting the first step of 2 biosynthetic pathways, one leading to arginine and/or urea and the other to pyrimidine nucleotides. The large subunit (synthetase) binds the substrates ammonia (free or transferred from glutamine from the small subunit), hydrogencarbonate and ATP and carries out an ATP-coupled ligase reaction, activating hydrogencarbonate by forming carboxy phosphate which reacts with ammonia to form carbamoyl phosphate. This Mycobacterium bovis (strain ATCC BAA-935 / AF2122/97) protein is Carbamoyl phosphate synthase large chain.